The sequence spans 360 residues: 8-hydroxygeraniol dehydrogenase (360 aa).

Zn(2+) contacts are provided by C50, H72, C103, C106, C109, C117, and C166.

This sequence belongs to the zinc-containing alcohol dehydrogenase family. The cofactor is Zn(2+). Present in seedlings and vascular tissues (at protein level). Restricted to the epidermis.

The enzyme catalyses (6E)-8-hydroxygeraniol + 2 NADP(+) = (6E)-8-oxogeranial + 2 NADPH + 2 H(+). In terms of biological role, dehydrogenase involved in the biosynthesis of oxogeranial from hydroxygeraniol, a precursor of the terpenoid indole alkaloids such as vinblastine and vincristine. The chain is 8-hydroxygeraniol dehydrogenase (10HGO) from Catharanthus roseus (Madagascar periwinkle).